A 156-amino-acid polypeptide reads, in one-letter code: Arginine repressor (156 aa).

This sequence belongs to the ArgR family.

Its subcellular location is the cytoplasm. It participates in amino-acid biosynthesis; L-arginine biosynthesis [regulation]. Functionally, regulates arginine biosynthesis genes. This Escherichia coli O81 (strain ED1a) protein is Arginine repressor.